The chain runs to 114 residues: Aspartate 1-decarboxylase (114 aa).

S25 functions as the Schiff-base intermediate with substrate; via pyruvic acid in the catalytic mechanism. Residue S25 is modified to Pyruvic acid (Ser). T57 is a substrate binding site. Residue Y58 is the Proton donor of the active site. Position 71–73 (71–73 (GAA)) interacts with substrate.

It belongs to the PanD family. In terms of assembly, heterooctamer of four alpha and four beta subunits. Requires pyruvate as cofactor. Is synthesized initially as an inactive proenzyme, which is activated by self-cleavage at a specific serine bond to produce a beta-subunit with a hydroxyl group at its C-terminus and an alpha-subunit with a pyruvoyl group at its N-terminus.

It is found in the cytoplasm. The catalysed reaction is L-aspartate + H(+) = beta-alanine + CO2. It participates in cofactor biosynthesis; (R)-pantothenate biosynthesis; beta-alanine from L-aspartate: step 1/1. Its function is as follows. Catalyzes the pyruvoyl-dependent decarboxylation of aspartate to produce beta-alanine. The polypeptide is Aspartate 1-decarboxylase (Haloquadratum walsbyi (strain DSM 16790 / HBSQ001)).